The sequence spans 193 residues: Histone H5 (193 aa).

Residues 1–11 (TDSPIPAPAPA) show a composition bias toward pro residues. Disordered stretches follow at residues 1 to 29 (TDSP…HPTY) and 80 to 193 (GVLK…PKKK). Residues 13-24 (KPKRARAPRKPA) show a composition bias toward basic residues. One can recognise an H15 domain in the interval 25 to 98 (SHPTYSEMIA…GASGSFRLAK (74 aa)). A compositionally biased stretch (basic residues) spans 104-193 (RSPAGRKKKK…SGARKSPKKK (90 aa)).

Belongs to the histone H1/H5 family. Erythroid cells.

Its subcellular location is the nucleus. The protein resides in the chromosome. In terms of biological role, histone H5 performs the same function as H1, being necessary for the condensation of nucleosome chains into higher order structures, and replaces histone H1 in certain cells. The chain is Histone H5 from Anser anser anser (Western greylag goose).